A 306-amino-acid chain; its full sequence is Ribosomal RNA small subunit methyltransferase H (306 aa).

S-adenosyl-L-methionine-binding positions include 36–38 (GGH), Asp56, Phe80, Asp97, and Gln104. The interval 280–306 (ASEEEVAGNPRSRSAVMRVAERTGEAA) is disordered.

It belongs to the methyltransferase superfamily. RsmH family.

The protein resides in the cytoplasm. It catalyses the reaction cytidine(1402) in 16S rRNA + S-adenosyl-L-methionine = N(4)-methylcytidine(1402) in 16S rRNA + S-adenosyl-L-homocysteine + H(+). Specifically methylates the N4 position of cytidine in position 1402 (C1402) of 16S rRNA. The polypeptide is Ribosomal RNA small subunit methyltransferase H (Polaromonas naphthalenivorans (strain CJ2)).